Here is a 481-residue protein sequence, read N- to C-terminus: Argininosuccinate lyase (481 aa).

This sequence belongs to the lyase 1 family. Argininosuccinate lyase subfamily.

It localises to the cytoplasm. The catalysed reaction is 2-(N(omega)-L-arginino)succinate = fumarate + L-arginine. Its pathway is amino-acid biosynthesis; L-arginine biosynthesis; L-arginine from L-ornithine and carbamoyl phosphate: step 3/3. This is Argininosuccinate lyase from Methanococcus maripaludis (strain C7 / ATCC BAA-1331).